We begin with the raw amino-acid sequence, 282 residues long: Secretory carrier-associated membrane protein 1 (282 aa).

The segment at 1-49 is disordered; the sequence is MSRYQSHSFDDGEINPFANPTSVPAATSKLSPLPPEPYDRGATMDIPLD. Over 1-117 the chain is Cytoplasmic; the sequence is MSRYQSHSFD…EIPIHLQRIQ (117 aa). A compositionally biased stretch (polar residues) spans 18–30; sequence ANPTSVPAATSKL. Residue S31 is modified to Phosphoserine. The stretch at 48-93 forms a coiled coil; sequence LDSGKDLKAKEKELREKEAELKRREQEIKRKEDAIAQAGIVIEEKN. Transmembrane regions (helical) follow at residues 118–138, 150–170, 185–205, and 233–253; these read YVAF…IVAV, IWFL…VMWY, FGWF…AAVA, and IFYF…IWVI. The Cytoplasmic portion of the chain corresponds to 254 to 282; it reads QQVYMYFRGSGKAAEMKQEATRRAMMAAL.

Belongs to the SCAMP family.

It localises to the cell membrane. Its subcellular location is the cytoplasmic vesicle. It is found in the secretory vesicle membrane. Probably involved in membrane trafficking. This Arabidopsis thaliana (Mouse-ear cress) protein is Secretory carrier-associated membrane protein 1 (SCAMP1).